A 518-amino-acid chain; its full sequence is Ankyrin repeat and SOCS box protein 3 (518 aa).

ANK repeat units lie at residues 9 to 38 (DTCS…SVDV), 42 to 71 (RGWM…SENY), 78 to 107 (EGFC…DPNA), 111 to 140 (EETT…NVNG), 145 to 174 (CGWN…NKEC), 178 to 207 (FGIT…NVNC), 211 to 240 (DKAT…DPDL), 246 to 275 (SWQL…RACD), 279 to 308 (NKVS…SPDA), 315 to 346 (GFSS…QINE), and 348 to 373 (HLAY…SLGP). Positions 441–504 (MLSARASNAW…HNYLLYEDVL (64 aa)) constitute an SOCS box domain.

The protein belongs to the ankyrin SOCS box (ASB) family. As to quaternary structure, interacts with ELOB and TNFRSF1B.

Its subcellular location is the cytoplasm. It functions in the pathway protein modification; protein ubiquitination. Probable substrate-recognition component of a SCF-like ECS (Elongin-Cullin-SOCS-box protein) E3 ubiquitin-protein ligase complex which mediates the ubiquitination and subsequent proteasomal degradation of target proteins. Recognizes TNFRSF1B. Plays a role in the down-regulation of antiviral innate immunity by targeting MAVS for ubiquitin-proteasomal degradation. Also destabilizes TRAF6 by enhancing its 'Lys-48'-linked polyubiquitination. In Homo sapiens (Human), this protein is Ankyrin repeat and SOCS box protein 3 (ASB3).